Reading from the N-terminus, the 389-residue chain is Succinate--CoA ligase [ADP-forming] subunit beta (389 aa).

Residues 9-236 enclose the ATP-grasp domain; it reads RDMFEAHGVP…KDAADPLEAK (228 aa). Residues lysine 45, 52-54, alanine 94, and glutamate 99 contribute to the ATP site; that span reads GRG. 2 residues coordinate Mg(2+): asparagine 191 and aspartate 205. Substrate-binding positions include asparagine 256 and 318-320; that span reads GIT.

This sequence belongs to the succinate/malate CoA ligase beta subunit family. As to quaternary structure, heterotetramer of two alpha and two beta subunits. Mg(2+) is required as a cofactor.

It catalyses the reaction succinate + ATP + CoA = succinyl-CoA + ADP + phosphate. It carries out the reaction GTP + succinate + CoA = succinyl-CoA + GDP + phosphate. The protein operates within carbohydrate metabolism; tricarboxylic acid cycle; succinate from succinyl-CoA (ligase route): step 1/1. Succinyl-CoA synthetase functions in the citric acid cycle (TCA), coupling the hydrolysis of succinyl-CoA to the synthesis of either ATP or GTP and thus represents the only step of substrate-level phosphorylation in the TCA. The beta subunit provides nucleotide specificity of the enzyme and binds the substrate succinate, while the binding sites for coenzyme A and phosphate are found in the alpha subunit. In Paenarthrobacter aurescens (strain TC1), this protein is Succinate--CoA ligase [ADP-forming] subunit beta.